The following is a 690-amino-acid chain: Elongation factor G (690 aa).

Residues 8–282 form the tr-type G domain; it reads DKVRNIGIMA…AIVNYLPSPL (275 aa). GTP contacts are provided by residues 17–24, 81–85, and 135–138; these read AHIDAGKT, DTPGH, and NKMD.

It belongs to the TRAFAC class translation factor GTPase superfamily. Classic translation factor GTPase family. EF-G/EF-2 subfamily.

It is found in the cytoplasm. Catalyzes the GTP-dependent ribosomal translocation step during translation elongation. During this step, the ribosome changes from the pre-translocational (PRE) to the post-translocational (POST) state as the newly formed A-site-bound peptidyl-tRNA and P-site-bound deacylated tRNA move to the P and E sites, respectively. Catalyzes the coordinated movement of the two tRNA molecules, the mRNA and conformational changes in the ribosome. The sequence is that of Elongation factor G from Caldanaerobacter subterraneus subsp. tengcongensis (strain DSM 15242 / JCM 11007 / NBRC 100824 / MB4) (Thermoanaerobacter tengcongensis).